The primary structure comprises 87 residues: MTILSAITSISRPNKISKSVISSNGGASLSMGSNSVSCFNACGGGSSYSYSSSYSGSGLDYSYKANYSSSTGYNSSVVIASSTCHCS.

It belongs to the hssA/B family.

The protein is HssA/B-like protein 56 (hssl56) of Dictyostelium discoideum (Social amoeba).